We begin with the raw amino-acid sequence, 313 residues long: L-lactate dehydrogenase 1 (313 aa).

NAD(+)-binding residues include valine 15, aspartate 36, arginine 41, and tyrosine 66. Substrate-binding positions include glutamine 83, arginine 89, and 121–124; that span reads NPVD. NAD(+)-binding positions include 119-121 and serine 144; that span reads ASN. 149–152 provides a ligand contact to substrate; that stretch reads DTAR. 2 residues coordinate beta-D-fructose 1,6-bisphosphate: arginine 154 and histidine 169. Histidine 176 acts as the Proton acceptor in catalysis. Tyrosine 218 carries the phosphotyrosine modification. Threonine 227 serves as a coordination point for substrate.

The protein belongs to the LDH/MDH superfamily. LDH family. Homotetramer.

It is found in the cytoplasm. It catalyses the reaction (S)-lactate + NAD(+) = pyruvate + NADH + H(+). Its pathway is fermentation; pyruvate fermentation to lactate; (S)-lactate from pyruvate: step 1/1. Allosterically activated by fructose 1,6-bisphosphate (FBP). Functionally, catalyzes the conversion of lactate to pyruvate. This Listeria monocytogenes serotype 4b (strain F2365) protein is L-lactate dehydrogenase 1.